We begin with the raw amino-acid sequence, 59 residues long: Conotoxin Sr5.4 (59 aa).

An N-terminal signal peptide occupies residues 1 to 22 (MRCLPVFVILLLLIASAPSVDA). A propeptide spanning residues 23–44 (QLKTKDDVPLASFHDNAKGTQH) is cleaved from the precursor.

It belongs to the conotoxin T superfamily. Post-translationally, contains 2 disulfide bonds that can be either 'C1-C3, C2-C4' or 'C1-C4, C2-C3', since these disulfide connectivities have been observed for conotoxins with cysteine framework V (for examples, see AC P0DQQ7 and AC P81755). As to expression, expressed by the venom duct.

Its subcellular location is the secreted. This is Conotoxin Sr5.4 from Conus spurius (Alphabet cone).